Here is a 494-residue protein sequence, read N- to C-terminus: UDP-N-acetylmuramoyl-L-alanyl-D-glutamate--L-lysine ligase (494 aa).

Residue serine 30 participates in UDP-N-acetyl-alpha-D-muramoyl-L-alanyl-D-glutamate binding. 110–116 (GTNGKTS) lines the ATP pocket. UDP-N-acetyl-alpha-D-muramoyl-L-alanyl-D-glutamate is bound by residues 152–153 (TT), serine 179, and arginine 187. An N6-carboxylysine modification is found at lysine 219. Residues 406–409 (DNPA) carry the L-lysine recognition motif motif.

Belongs to the MurCDEF family. MurE subfamily. In terms of processing, carboxylation is probably crucial for Mg(2+) binding and, consequently, for the gamma-phosphate positioning of ATP.

The protein localises to the cytoplasm. It carries out the reaction UDP-N-acetyl-alpha-D-muramoyl-L-alanyl-D-glutamate + L-lysine + ATP = UDP-N-acetyl-alpha-D-muramoyl-L-alanyl-gamma-D-glutamyl-L-lysine + ADP + phosphate + H(+). It participates in cell wall biogenesis; peptidoglycan biosynthesis. In terms of biological role, catalyzes the addition of L-lysine to the nucleotide precursor UDP-N-acetylmuramoyl-L-alanyl-D-glutamate (UMAG) in the biosynthesis of bacterial cell-wall peptidoglycan. This is UDP-N-acetylmuramoyl-L-alanyl-D-glutamate--L-lysine ligase from Staphylococcus aureus (strain MW2).